The sequence spans 968 residues: RNA polymerase-associated protein RapA (968 aa).

Residues 164 to 334 (DVGRRHAPRV…FARLRLLDPD (171 aa)) form the Helicase ATP-binding domain. 177–184 (DEVGLGKT) provides a ligand contact to ATP. The DEAH box motif lies at 280–283 (DEAH). A Helicase C-terminal domain is found at 490–643 (RVEWLMGYLT…HTCPTGRAVY (154 aa)).

Belongs to the SNF2/RAD54 helicase family. RapA subfamily. In terms of assembly, interacts with the RNAP. Has a higher affinity for the core RNAP than for the holoenzyme. Its ATPase activity is stimulated by binding to RNAP.

In terms of biological role, transcription regulator that activates transcription by stimulating RNA polymerase (RNAP) recycling in case of stress conditions such as supercoiled DNA or high salt concentrations. Probably acts by releasing the RNAP, when it is trapped or immobilized on tightly supercoiled DNA. Does not activate transcription on linear DNA. Probably not involved in DNA repair. In Erwinia tasmaniensis (strain DSM 17950 / CFBP 7177 / CIP 109463 / NCPPB 4357 / Et1/99), this protein is RNA polymerase-associated protein RapA.